Consider the following 120-residue polypeptide: Spermidine export protein MdtJ (120 aa).

4 consecutive transmembrane segments (helical) span residues 1 to 21 (MFYW…TLSM), 31 to 51 (AGFI…SFAV), 54 to 74 (IALG…ITIF), and 81 to 101 (EALS…IVLI).

It belongs to the drug/metabolite transporter (DMT) superfamily. Small multidrug resistance (SMR) (TC 2.A.7.1) family. MdtJ subfamily. In terms of assembly, forms a complex with MdtI.

The protein resides in the cell inner membrane. Functionally, catalyzes the excretion of spermidine. The polypeptide is Spermidine export protein MdtJ (Salmonella paratyphi A (strain ATCC 9150 / SARB42)).